Reading from the N-terminus, the 501-residue chain is E3 ubiquitin-protein ligase TRIM35 (501 aa).

Met1 is modified (N-acetylmethionine). Ser8 bears the Phosphoserine mark. The segment at 21 to 61 (CAVCYDPFRDAVTLRCGHNFCRRCVSGCWEVQTTPSCPVCK) adopts an RING-type zinc-finger fold. The B box-type zinc-finger motif lies at 96-137 (RSPRPCRAHRAPLTLFCLEDKELLCCACQADARHQEHRVQPI). Zn(2+) contacts are provided by Cys101, His104, Cys123, and His129. Residues 200–252 (VEEQATLDAMKEESRKKHLQAEEKMKQLAEQTEALAREIERLQMEMKEDDMTF) adopt a coiled-coil conformation. Residues 284–495 (LESLQYRVWK…LRICHLRVSI (212 aa)) enclose the B30.2/SPRY domain.

The protein belongs to the TRIM/RBCC family. In terms of assembly, interacts with PKM isoform M2, but not isoform M1; this interaction may compete with that between PKM and FGFR1, and hence reduces FGFR1-dependent tyrosine phosphorylation of PKM. Interacts with IRF7; this interaction promotes IRF7 proteasomal degradation. Interacts with TRAF3; this interaction promotes TRAF3 activation. As to expression, widely expressed. Highly expressed in brain, heart, kidney, spleen, skeletal muscle, lung and thymus. Lower expression found in stomach, large intestine and bone marrow.

The protein localises to the cytoplasm. It is found in the nucleus. It carries out the reaction S-ubiquitinyl-[E2 ubiquitin-conjugating enzyme]-L-cysteine + [acceptor protein]-L-lysine = [E2 ubiquitin-conjugating enzyme]-L-cysteine + N(6)-ubiquitinyl-[acceptor protein]-L-lysine.. Its pathway is protein modification; protein ubiquitination. Its function is as follows. E3 ubiquitin-protein ligase that participates in multiple biological processes including cell death, glucose metabolism, and in particular, the innate immune response. Mediates 'Lys-63'-linked polyubiquitination of TRAF3 thereby promoting type I interferon production via RIG-I signaling pathway. Can also catalyze 'Lys-48'-linked polyubiquitination and proteasomal degradation of viral proteins such as influenza virus PB2. Acts as a negative feedback regulator of TLR7- and TLR9-triggered signaling. Mechanistically, promotes the 'Lys-48'-linked ubiquitination of IRF7 and induces its degradation via a proteasome-dependent pathway. Reduces FGFR1-dependent tyrosine phosphorylation of PKM, inhibiting PKM-dependent lactate production, glucose metabolism, and cell growth. In Mus musculus (Mouse), this protein is E3 ubiquitin-protein ligase TRIM35 (Trim35).